The sequence spans 463 residues: Methionine aminopeptidase 2-1 (463 aa).

Residues 1–98 are disordered; that stretch reads MGSKTPEEQI…PPRVPLSDLF (98 aa). The span at 30–45 shows a compositional bias: basic and acidic residues; that stretch reads RGTHLSRDGDGSLGDH. Positions 46 to 55 are enriched in acidic residues; it reads GDDDDADEDD. Residues 69-81 are compositionally biased toward basic residues; the sequence is KKKKRPKKKKKPA. Histidine 214 is a binding site for substrate. The a divalent metal cation site is built by aspartate 235, aspartate 246, and histidine 315. Histidine 323 is a substrate binding site. A divalent metal cation is bound by residues glutamate 348 and glutamate 444.

Belongs to the peptidase M24A family. Methionine aminopeptidase eukaryotic type 2 subfamily. Co(2+) serves as cofactor. Zn(2+) is required as a cofactor. It depends on Mn(2+) as a cofactor. Requires Fe(2+) as cofactor.

Its subcellular location is the cytoplasm. The enzyme catalyses Release of N-terminal amino acids, preferentially methionine, from peptides and arylamides.. In terms of biological role, cotranslationally removes the N-terminal methionine from nascent proteins. The N-terminal methionine is often cleaved when the second residue in the primary sequence is small and uncharged (Met-Ala-, Cys, Gly, Pro, Ser, Thr, or Val). In Colletotrichum graminicola (strain M1.001 / M2 / FGSC 10212) (Maize anthracnose fungus), this protein is Methionine aminopeptidase 2-1.